The following is a 300-amino-acid chain: MAEEVSSLMKATVLMRQPGRVQEIVSALRRGGGDRLQVISDFDMTLSRFAYNGQRCPSSHNILDNSKIISEDCRKELTELFHHYYPIEIDPHRTIKEKLPHMVQWWSKAHSLLCQQRIQKFQIAQVVGESTAMLREGYKMFFDTLYHNNIPLFIFSAGIGDILEEIIRQMKVFHPNIHIVSNYMDFSEDGFLKGFKGQLIHTYNKNSSVCENSSYFQQLRNKTNIILLGDSIGDLTMADGVPGVQNILKIGFLNDKVEERRERYMDSYDIVLEKDETLDVVNGLLQHILRQGDCVELQGS.

Asp-41 acts as the Nucleophile in catalysis. Mg(2+)-binding residues include Asp-41 and Asp-43. Residue Asp-43 is the Proton donor of the active site. Residue Glu-88 participates in CMP binding. Glu-88 contributes to the N(7)-methyl-GMP binding site. Residues 156 to 157 (SA) and Lys-205 each bind substrate. Residue Asp-230 participates in Mg(2+) binding. The residue at position 256 (Lys-256) is an N6-acetyllysine.

It belongs to the pyrimidine 5'-nucleotidase family. In terms of assembly, monomer.

The protein localises to the cytoplasm. It catalyses the reaction N(7)-methyl-GMP + H2O = N(7)-methylguanosine + phosphate. The enzyme catalyses CMP + H2O = cytidine + phosphate. The catalysed reaction is a ribonucleoside 5'-phosphate + H2O = a ribonucleoside + phosphate. Specifically hydrolyzes 7-methylguanosine monophosphate (m(7)GMP) to 7-methylguanosine and inorganic phosphate. The specific activity for m(7)GMP may protect cells against undesired salvage of m(7)GMP and its incorporation into nucleic acids. Also has weak activity for CMP. UMP and purine nucleotides are poor substrates. This Rattus norvegicus (Rat) protein is 7-methylguanosine phosphate-specific 5'-nucleotidase (Nt5c3b).